We begin with the raw amino-acid sequence, 343 residues long: Glycogen biosynthesis protein GlgD (343 aa).

The protein belongs to the bacterial/plant glucose-1-phosphate adenylyltransferase family.

Required for the synthesis of glycogen. This is Glycogen biosynthesis protein GlgD (glgD) from Geobacillus stearothermophilus (Bacillus stearothermophilus).